The following is a 460-amino-acid chain: 3-isopropylmalate dehydratase large subunit (460 aa).

Residues C338, C398, and C401 each coordinate [4Fe-4S] cluster.

It belongs to the aconitase/IPM isomerase family. LeuC type 1 subfamily. As to quaternary structure, heterodimer of LeuC and LeuD. Requires [4Fe-4S] cluster as cofactor.

The enzyme catalyses (2R,3S)-3-isopropylmalate = (2S)-2-isopropylmalate. Its pathway is amino-acid biosynthesis; L-leucine biosynthesis; L-leucine from 3-methyl-2-oxobutanoate: step 2/4. In terms of biological role, catalyzes the isomerization between 2-isopropylmalate and 3-isopropylmalate, via the formation of 2-isopropylmaleate. This Streptococcus thermophilus (strain ATCC BAA-250 / LMG 18311) protein is 3-isopropylmalate dehydratase large subunit.